Consider the following 509-residue polypeptide: Oligo-1,6-glucosidase (509 aa).

Asp198 functions as the Nucleophile in the catalytic mechanism. The active-site Proton donor is the Glu254.

The protein belongs to the glycosyl hydrolase 13 family.

The protein localises to the cytoplasm. The enzyme catalyses Hydrolysis of (1-&gt;6)-alpha-D-glucosidic linkages in some oligosaccharides produced from starch and glycogen by alpha-amylase, and in isomaltose.. This chain is Oligo-1,6-glucosidase (malL), found in Bacillus sp. (strain F5).